A 77-amino-acid polypeptide reads, in one-letter code: Translation initiation factor IF-1, chloroplastic (77 aa).

The S1-like domain occupies 1–71; that stretch reads MKEQKLIHEG…TRGRIIYRLR (71 aa).

This sequence belongs to the IF-1 family. In terms of assembly, component of the 30S ribosomal translation pre-initiation complex which assembles on the 30S ribosome in the order IF-2 and IF-3, IF-1 and N-formylmethionyl-tRNA(fMet); mRNA recruitment can occur at any time during PIC assembly.

It localises to the plastid. It is found in the chloroplast. Functionally, one of the essential components for the initiation of protein synthesis. Stabilizes the binding of IF-2 and IF-3 on the 30S subunit to which N-formylmethionyl-tRNA(fMet) subsequently binds. Helps modulate mRNA selection, yielding the 30S pre-initiation complex (PIC). Upon addition of the 50S ribosomal subunit IF-1, IF-2 and IF-3 are released leaving the mature 70S translation initiation complex. The sequence is that of Translation initiation factor IF-1, chloroplastic from Asarum canadense (Wild ginger).